The following is a 499-amino-acid chain: E3 ubiquitin-protein ligase TRIM69 (499 aa).

Positions 1-152 (MEVSSRPPSN…SMGQSKDFLQ (152 aa)) are necessary for nuclear localization. Residues 41 to 82 (CPLCNDWFRDPLMLTCGHNFCQACIQNYWKMQAKETFCPECK) form an RING-type zinc finger. Residues 160–265 (FTEELAIYQS…NIQARMEQQN (106 aa)) adopt a coiled-coil conformation. In terms of domain architecture, B30.2/SPRY spans 305–499 (PIQYTIWREM…KEPLHIVHPQ (195 aa)). Residue Ser-341 is modified to Phosphoserine.

It belongs to the TRIM/RBCC family. In terms of assembly, homo-multimer; required for antiviral activity. Interacts with PML. Phosphorylated. Phosphorylation is necessary for nuclear localization.

The protein resides in the cytoplasm. It is found in the nucleus. Its subcellular location is the nucleus speckle. The protein localises to the cytoskeleton. It localises to the microtubule organizing center. The protein resides in the centrosome. The enzyme catalyses S-ubiquitinyl-[E2 ubiquitin-conjugating enzyme]-L-cysteine + [acceptor protein]-L-lysine = [E2 ubiquitin-conjugating enzyme]-L-cysteine + N(6)-ubiquitinyl-[acceptor protein]-L-lysine.. It participates in protein modification; protein ubiquitination. E3 ubiquitin ligase that plays an important role in antiviral immunity by restricting different viral infections including dengue virus or vesicular stomatitis indiana virus. Ubiquitinates viral proteins such as dengue virus NS3 thereby limiting infection. In addition, acts as a key mediator of type I interferon induced microtubule stabilization by directly associating to microtubules independently of its E3 ligase activity. Also plays a role in cataract formation together with TP53. Mechanistically, inhibits UVB-induced cell apoptosis and reactive oxygen species (ROS) production by inducing TP53 ubiquitination. Regulates centrosome dynamics and mitotic progression by ubiquitinating STK3/MST2; leading to its redistribution to the perinuclear cytoskeleton and subsequent phosphorylation by PLK1. In Rattus norvegicus (Rat), this protein is E3 ubiquitin-protein ligase TRIM69 (Trim69).